The primary structure comprises 434 residues: BEN domain-containing protein 7 (434 aa).

Residues K16, K56, and K85 each participate in a glycyl lysine isopeptide (Lys-Gly) (interchain with G-Cter in SUMO2) cross-link. 2 disordered regions span residues 96 to 151 (PQRS…SNGE) and 212 to 262 (SRKR…ERTS). A compositionally biased stretch (polar residues) spans 97–150 (QRSNSSTEASQGLHSNSRGAWNELPTQSGQFSGQSGPRSRTFQTQPHISASSNG). Positions 212 to 222 (SRKRNKKKKVL) are enriched in basic residues. K244 is covalently cross-linked (Glycyl lysine isopeptide (Lys-Gly) (interchain with G-Cter in SUMO2)). The BEN domain occupies 289 to 399 (GFDVFMPKSQ…RRLKRGSAEV (111 aa)). T326 is modified (phosphothreonine). S330 bears the Phosphoserine mark. The tract at residues 414-434 (TGHTFVIKRETPEDPEPGSVA) is disordered.

The polypeptide is BEN domain-containing protein 7 (Bend7) (Mus musculus (Mouse)).